We begin with the raw amino-acid sequence, 189 residues long: MFWLLAIFAYLLGSLSFAILLSRLTGNPDPRMSGSGNAGATNMLRLAGKKLAVLTLLGDLCKGLAPVLIAHLAGLSLQQQAWVGLYAVLGHLFPLYFRFRGGKGVATAAGMLLGLYPPAALLAIAAWALTFYLTRTSSLAALIATPLTLPLLAWQEPEALLPMSVLTLLIVWRHRGNLRDLFAGRERHF.

The next 5 helical transmembrane spans lie at 1–21, 51–71, 77–97, 111–131, and 151–171; these read MFWLLAIFAYLLGSLSFAILL, LAVLTLLGDLCKGLAPVLIAH, LQQQAWVGLYAVLGHLFPLYF, MLLGLYPPAALLAIAAWALTF, and LLAWQEPEALLPMSVLTLLIV.

This sequence belongs to the PlsY family. As to quaternary structure, probably interacts with PlsX.

The protein resides in the cell inner membrane. The catalysed reaction is an acyl phosphate + sn-glycerol 3-phosphate = a 1-acyl-sn-glycero-3-phosphate + phosphate. The protein operates within lipid metabolism; phospholipid metabolism. Its function is as follows. Catalyzes the transfer of an acyl group from acyl-phosphate (acyl-PO(4)) to glycerol-3-phosphate (G3P) to form lysophosphatidic acid (LPA). This enzyme utilizes acyl-phosphate as fatty acyl donor, but not acyl-CoA or acyl-ACP. This is Glycerol-3-phosphate acyltransferase from Pseudomonas fluorescens (strain ATCC BAA-477 / NRRL B-23932 / Pf-5).